We begin with the raw amino-acid sequence, 1537 residues long: Dicer-like protein 1 (1537 aa).

The interval 38 to 68 is disordered; that stretch reads SDPAESSVDVQDEHSSDDSDNENEVFPKQND. Residues 133 to 314 form the Helicase ATP-binding domain; that stretch reads LFERAKTQNT…EAATRLETFL (182 aa). An ATP-binding site is contributed by 146–153; sequence LDTGSGKT. The DEAH box motif lies at 259-262; the sequence is DEAH. Residues 459–618 form the Helicase C-terminal domain; that stretch reads ELSKHFNDTT…EILPEDRILH (160 aa). The Dicer dsRNA-binding fold domain maps to 651 to 741; sequence AIAILARYAS…NSIYHRRLPA (91 aa). One can recognise a PAZ domain in the interval 891 to 1019; that stretch reads DTVSFVHNND…ICAEPLRISA (129 aa). RNase III domains lie at 1043–1202 and 1253–1405; these read IALE…LSGG and ARHV…VDSK. Residues E1294, D1391, and E1394 each coordinate Mg(2+). One can recognise a DRBM domain in the interval 1439–1507; it reads TFLHNKLTNE…SEKALAVLDG (69 aa). Zn(2+) contacts are provided by C1451, H1478, C1519, and C1521.

Belongs to the helicase family. Dicer subfamily. It depends on Mg(2+) as a cofactor. Mn(2+) serves as cofactor.

Functionally, dicer-like endonuclease involved in cleaving double-stranded RNA in the RNA interference (RNAi) pathway. Produces 21 to 25 bp dsRNAs (siRNAs) which target the selective destruction of homologous RNAs leading to sequence-specific suppression of gene expression, called post-transcriptional gene silencing (PTGS). Part of a broad host defense response against viral infection and transposons. This Aspergillus fumigatus (strain ATCC MYA-4609 / CBS 101355 / FGSC A1100 / Af293) (Neosartorya fumigata) protein is Dicer-like protein 1 (dcl1).